Here is a 29-residue protein sequence, read N- to C-terminus: Cytochrome b6-f complex subunit 8 (29 aa).

A helical transmembrane segment spans residues 3–23; it reads TVSIAWAALMVIFTFSISLVV.

The protein belongs to the PetN family. In terms of assembly, the 4 large subunits of the cytochrome b6-f complex are cytochrome b6, subunit IV (17 kDa polypeptide, PetD), cytochrome f and the Rieske protein, while the 4 small subunits are PetG, PetL, PetM and PetN. The complex functions as a dimer.

The protein resides in the plastid. The protein localises to the chloroplast thylakoid membrane. In terms of biological role, component of the cytochrome b6-f complex, which mediates electron transfer between photosystem II (PSII) and photosystem I (PSI), cyclic electron flow around PSI, and state transitions. The protein is Cytochrome b6-f complex subunit 8 of Psilotum nudum (Whisk fern).